The chain runs to 145 residues: D-aminoacyl-tRNA deacylase (145 aa).

The Gly-cisPro motif, important for rejection of L-amino acids motif lies at 137–138 (GP).

This sequence belongs to the DTD family. As to quaternary structure, homodimer.

The protein localises to the cytoplasm. The enzyme catalyses glycyl-tRNA(Ala) + H2O = tRNA(Ala) + glycine + H(+). It catalyses the reaction a D-aminoacyl-tRNA + H2O = a tRNA + a D-alpha-amino acid + H(+). Functionally, an aminoacyl-tRNA editing enzyme that deacylates mischarged D-aminoacyl-tRNAs. Also deacylates mischarged glycyl-tRNA(Ala), protecting cells against glycine mischarging by AlaRS. Acts via tRNA-based rather than protein-based catalysis; rejects L-amino acids rather than detecting D-amino acids in the active site. By recycling D-aminoacyl-tRNA to D-amino acids and free tRNA molecules, this enzyme counteracts the toxicity associated with the formation of D-aminoacyl-tRNA entities in vivo and helps enforce protein L-homochirality. The protein is D-aminoacyl-tRNA deacylase of Shewanella sediminis (strain HAW-EB3).